The primary structure comprises 631 residues: Fatty acid ABC transporter ATP-binding/permease protein (631 aa).

Over residues 1–11 (MTAPPGARPRA) the composition is skewed to low complexity. Positions 1–20 (MTAPPGARPRAASPPPNMRS) are disordered. Helical transmembrane passes span 42–62 (IAVITLGIAGTTIGVIVPRIL), 123–143 (LALALALYLAAALMIWAQARL), and 205–225 (ILTMVAVLAMMVSISGLLALI). Residues 42 to 365 (IAVITLGIAG…LAGMYNALQS (324 aa)) form the ABC transmembrane type-1 domain. The 235-residue stretch at 397–631 (VEFEHVNFAY…RGVYYQMTRA (235 aa)) folds into the ABC transporter domain. Residue 430–437 (GPTGAGKT) coordinates ATP.

This sequence belongs to the ABC transporter superfamily. Lipid exporter (TC 3.A.1.106) family.

The protein localises to the cell inner membrane. Its function is as follows. ABC transporter involved in fatty acid import. Transmembrane domains (TMD) form a pore in the membrane and the ATP-binding domain (NBD) is responsible for energy generation. The protein is Fatty acid ABC transporter ATP-binding/permease protein of Mycobacterium bovis (strain ATCC BAA-935 / AF2122/97).